The chain runs to 142 residues: Large ribosomal subunit protein uL13 (142 aa).

Belongs to the universal ribosomal protein uL13 family. As to quaternary structure, part of the 50S ribosomal subunit.

Functionally, this protein is one of the early assembly proteins of the 50S ribosomal subunit, although it is not seen to bind rRNA by itself. It is important during the early stages of 50S assembly. The chain is Large ribosomal subunit protein uL13 from Yersinia enterocolitica serotype O:8 / biotype 1B (strain NCTC 13174 / 8081).